The sequence spans 102 residues: Large ribosomal subunit protein bL21 (102 aa).

It belongs to the bacterial ribosomal protein bL21 family. As to quaternary structure, part of the 50S ribosomal subunit. Contacts protein L20.

Its function is as follows. This protein binds to 23S rRNA in the presence of protein L20. The polypeptide is Large ribosomal subunit protein bL21 (Azorhizobium caulinodans (strain ATCC 43989 / DSM 5975 / JCM 20966 / LMG 6465 / NBRC 14845 / NCIMB 13405 / ORS 571)).